Reading from the N-terminus, the 259-residue chain is Insulin-induced gene 1 protein (259 aa).

Topologically, residues 1 to 66 (MPRLHDHVWN…ARPGSWHHDL (66 aa)) are cytoplasmic. The interval 36–55 (PGVPEPEHAPRGQRAGTTGC) is disordered. Residues 67 to 89 (VQRSLVLFSFGVVLALVLNLLQI) form a helical membrane-spanning segment. Residues 90-108 (QRNVTLFPDEVIATIFSSA) are Extracellular-facing. A helical membrane pass occupies residues 109–126 (WWVPPCCGTAAAVVGLLY). At 127–141 (PCIDSHLGEPHKFKR) the chain is on the cytoplasmic side. Residues Lys138 and Lys140 each participate in a glycyl lysine isopeptide (Lys-Gly) (interchain with G-Cter in ubiquitin) cross-link. A helical membrane pass occupies residues 142–164 (EWASVMRCIAVFVGINHASAKLD). At 165–167 (FAN) the chain is on the extracellular side. Residues 168 to 186 (NVQLSLTLAALSLGLWWTF) form a helical membrane-spanning segment. At 187 to 191 (DRSRS) the chain is on the cytoplasmic side. Ser189 carries the post-translational modification Phosphoserine. The helical transmembrane segment at 192–213 (GLGLGITIAFLATLITQFLVYN) threads the bilayer. Over 214–227 (GVYQYTSPDFLYIR) the chain is Extracellular. Residues 228-245 (SWLPCIFFSGGVTVGNIG) traverse the membrane as a helical segment. Residues 246-259 (RQLAMGVPEKPHSD) are Cytoplasmic-facing. A KxHxx motif is present at residues 253–259 (PEKPHSD).

Belongs to the INSIG family. In terms of assembly, interacts with SCAP; interaction is direct and only takes place in the presence of sterols; it prevents interaction between SCAP and the coat protein complex II (COPII). Associates with the SCAP-SREBP complex (composed of SCAP and SREBF1/SREBP1 or SREBF2/SREBP2); association is mediated via its interaction with SCAP and only takes place in the presence of sterols. Interaction with SCAP is mutually exclusive with PAQR3. Interacts with HMGCR (via its SSD); the interaction, accelerated by sterols, leads to the recruitment of HMGCR to AMFR/gp78 for its ubiquitination by the sterol-mediated ERAD pathway. Interacts with AMFR/gp78 (via its membrane domain); the interaction recruits HMCR at the ER membrane for its ubiquitination and degradation by the sterol-mediated ERAD pathway. Interacts with SOAT2/ACAT2; leading to promote recruitment of AMFR/gp78 and subsequent ubiquitination of SOAT2/ACAT2. Interacts with RNF139. Interacts with RNF145. Phosphorylation at Ser-189 by PCK1 reduces binding to oxysterol, disrupting the interaction between INSIG1 and SCAP, thereby promoting nuclear translocation of SREBP proteins (SREBF1/SREBP1 or SREBF2/SREBP2) and subsequent transcription of downstream lipogenesis-related genes. In terms of processing, ubiquitinated by AMFR/gp78 in response to sterol deprivation, leading to its degradation: when the SCAP-SREBP complex becomes dissociated from INSIG1, INSIG1 is then ubiquitinated and degraded in proteasomes. Although ubiquitination is required for rapid INSIG1 degradation, it is not required for release of the SCAP-SREBP complex. Ubiquitinated by RNF139.

Its subcellular location is the endoplasmic reticulum membrane. Oxysterol-binding protein that mediates feedback control of cholesterol synthesis by controlling both endoplasmic reticulum to Golgi transport of SCAP and degradation of HMGCR. Acts as a negative regulator of cholesterol biosynthesis by mediating the retention of the SCAP-SREBP complex in the endoplasmic reticulum, thereby blocking the processing of sterol regulatory element-binding proteins (SREBPs) SREBF1/SREBP1 and SREBF2/SREBP2. Binds oxysterol, including 25-hydroxycholesterol, regulating interaction with SCAP and retention of the SCAP-SREBP complex in the endoplasmic reticulum. In presence of oxysterol, interacts with SCAP, retaining the SCAP-SREBP complex in the endoplasmic reticulum, thereby preventing SCAP from escorting SREBF1/SREBP1 and SREBF2/SREBP2 to the Golgi. Sterol deprivation or phosphorylation by PCK1 reduce oxysterol-binding, disrupting the interaction between INSIG1 and SCAP, thereby promoting Golgi transport of the SCAP-SREBP complex, followed by processing and nuclear translocation of SREBF1/SREBP1 and SREBF2/SREBP2. Also regulates cholesterol synthesis by regulating degradation of HMGCR: initiates the sterol-mediated ubiquitin-mediated endoplasmic reticulum-associated degradation (ERAD) of HMGCR via recruitment of the reductase to the ubiquitin ligases AMFR/gp78 and/or RNF139. Also regulates degradation of SOAT2/ACAT2 when the lipid levels are low: initiates the ubiquitin-mediated degradation of SOAT2/ACAT2 via recruitment of the ubiquitin ligases AMFR/gp78. This is Insulin-induced gene 1 protein from Mus musculus (Mouse).